We begin with the raw amino-acid sequence, 168 residues long: Ribosome maturation factor RimM (168 aa).

The region spanning 96–168 (KDEYYWGDLV…RIRVAWQKDW (73 aa)) is the PRC barrel domain.

It belongs to the RimM family. Binds ribosomal protein uS19.

The protein resides in the cytoplasm. Its function is as follows. An accessory protein needed during the final step in the assembly of 30S ribosomal subunit, possibly for assembly of the head region. Essential for efficient processing of 16S rRNA. May be needed both before and after RbfA during the maturation of 16S rRNA. It has affinity for free ribosomal 30S subunits but not for 70S ribosomes. This chain is Ribosome maturation factor RimM, found in Azoarcus sp. (strain BH72).